The chain runs to 362 residues: Shewanella-like protein phosphatase 1 (362 aa).

The first 23 residues, 1–23, serve as a signal peptide directing secretion; it reads MIFKKALYILLFLYIAIVKKGES. The Mn(2+) site is built by Asp65, His67, Asp101, and Asn136. His137 (proton donor) is an active-site residue. A Mn(2+)-binding site is contributed by His196.

It belongs to the metallophosphoesterase superfamily. SLP family. Mn(2+) is required as a cofactor.

Functionally, phosphatase which plays an essential role in the development and differentiation of the ookinete and in the formation of ookinete micronemes. This Plasmodium berghei (strain Anka) protein is Shewanella-like protein phosphatase 1.